An 801-amino-acid polypeptide reads, in one-letter code: Phenylalanine--tRNA ligase beta subunit (801 aa).

The tRNA-binding domain occupies 39–153 (AEGLSKLVVG…EDAVPGESIF (115 aa)). Residues 406-481 (TDDIQVSTSL…RIYGYDKLPT (76 aa)) form the B5 domain. 4 residues coordinate Mg(2+): Asp459, Asp465, Glu468, and Glu469. In terms of domain architecture, FDX-ACB spans 708-801 (TKFPAVSRDI…LTEKVGAEVR (94 aa)).

The protein belongs to the phenylalanyl-tRNA synthetase beta subunit family. Type 1 subfamily. Tetramer of two alpha and two beta subunits. Requires Mg(2+) as cofactor.

It localises to the cytoplasm. The enzyme catalyses tRNA(Phe) + L-phenylalanine + ATP = L-phenylalanyl-tRNA(Phe) + AMP + diphosphate + H(+). The protein is Phenylalanine--tRNA ligase beta subunit of Streptococcus mutans serotype c (strain ATCC 700610 / UA159).